A 165-amino-acid chain; its full sequence is Peptide methionine sulfoxide reductase MsrA (165 aa).

Residue Cys-10 is part of the active site.

This sequence belongs to the MsrA Met sulfoxide reductase family.

The catalysed reaction is L-methionyl-[protein] + [thioredoxin]-disulfide + H2O = L-methionyl-(S)-S-oxide-[protein] + [thioredoxin]-dithiol. It carries out the reaction [thioredoxin]-disulfide + L-methionine + H2O = L-methionine (S)-S-oxide + [thioredoxin]-dithiol. Has an important function as a repair enzyme for proteins that have been inactivated by oxidation. Catalyzes the reversible oxidation-reduction of methionine sulfoxide in proteins to methionine. The chain is Peptide methionine sulfoxide reductase MsrA from Campylobacter jejuni (strain RM1221).